The following is a 147-amino-acid chain: Pathogenesis-related protein PR-4B (147 aa).

Residues methionine 1 to alanine 25 form the signal peptide. The Barwin domain occupies glutamine 26–aspartate 147. 3 disulfide bridges follow: cysteine 54-cysteine 86, cysteine 75-cysteine 109, and cysteine 89-cysteine 145.

It localises to the secreted. Its subcellular location is the cell wall. The chain is Pathogenesis-related protein PR-4B from Nicotiana tabacum (Common tobacco).